Here is a 201-residue protein sequence, read N- to C-terminus: IDLSRF-like peptide (201 aa).

A signal peptide spans 1–28 (MVRRFCNGAVALGIALTACAAFPRAIMA). The propeptide occupies 43–201 (SDACHPYEPF…EKLVKTGFLD (159 aa)). Positions 45–85 (ACHPYEPFKCPGDGLCISIQYLCDGAPDCQDGYDEDSRLCT) constitute an LDL-receptor class A domain. Cystine bridges form between cysteine 46–cysteine 60, cysteine 54–cysteine 73, and cysteine 67–cysteine 84.

Expressed in central brain, antennal and optical lobes, in gnathal, thoracic and abdominal ganglia and in the retrocerebral complex (at protein level).

Its subcellular location is the secreted. The chain is IDLSRF-like peptide from Camponotus floridanus (Florida carpenter ant).